Here is a 92-residue protein sequence, read N- to C-terminus: Small ribosomal subunit protein uS19c (92 aa).

The protein belongs to the universal ribosomal protein uS19 family.

Its subcellular location is the plastid. It localises to the chloroplast. Functionally, protein S19 forms a complex with S13 that binds strongly to the 16S ribosomal RNA. This chain is Small ribosomal subunit protein uS19c, found in Angiopteris evecta (Mule's foot fern).